The chain runs to 450 residues: Divalent metal cation transporter MntH (450 aa).

A run of 11 helical transmembrane segments spans residues 44–64 (LLAF…PGNW), 77–97 (TLLS…SLAA), 121–141 (FLLW…EVIG), 152–172 (IPLI…LLLM), 181–201 (AFVI…IVAA), 218–238 (IFTN…TVMP), 273–293 (IALM…AATF), 310–330 (LLSP…ALLA), 366–386 (GIAI…GTAD), 387–407 (LLVF…IPLV), and 419–439 (FAIS…IVVL).

The protein belongs to the NRAMP family.

It is found in the cell inner membrane. Its function is as follows. H(+)-stimulated, divalent metal cation uptake system. The sequence is that of Divalent metal cation transporter MntH from Bradyrhizobium diazoefficiens (strain JCM 10833 / BCRC 13528 / IAM 13628 / NBRC 14792 / USDA 110).